The sequence spans 170 residues: Large ribosomal subunit protein uL18m (170 aa).

It belongs to the universal ribosomal protein uL18 family. As to quaternary structure, component of the mitochondrial ribosome large subunit (39S) which comprises a 16S rRNA and about 50 distinct proteins.

The protein resides in the mitochondrion. The sequence is that of Large ribosomal subunit protein uL18m (mrpl-18) from Caenorhabditis elegans.